The chain runs to 214 residues: Soluble inorganic pyrophosphatase (214 aa).

K64, R78, and Y90 together coordinate substrate. Mg(2+) contacts are provided by D100, D105, and D137. Y174 contacts substrate.

The protein belongs to the PPase family. Mg(2+) serves as cofactor.

Its subcellular location is the cytoplasm. The enzyme catalyses diphosphate + H2O = 2 phosphate + H(+). This Oryza sativa subsp. indica (Rice) protein is Soluble inorganic pyrophosphatase (IPP).